Consider the following 113-residue polypeptide: Pancreatic progenitor cell differentiation and proliferation factor B (113 aa).

This sequence belongs to the PPDPF family.

Its function is as follows. Probable regulator of exocrine pancreas development. This is Pancreatic progenitor cell differentiation and proliferation factor B (ppdpf-b) from Xenopus laevis (African clawed frog).